Reading from the N-terminus, the 901-residue chain is HTH-type transcriptional regulator MalT (901 aa).

An ATP-binding site is contributed by Ser-39–Thr-46. The HTH luxR-type domain maps to Glu-829 to Leu-894. Residues Asn-853–Arg-872 constitute a DNA-binding region (H-T-H motif).

This sequence belongs to the MalT family. Monomer in solution. Oligomerizes to an active state in the presence of the positive effectors ATP and maltotriose.

With respect to regulation, activated by ATP and maltotriose, which are both required for DNA binding. Functionally, positively regulates the transcription of the maltose regulon whose gene products are responsible for uptake and catabolism of malto-oligosaccharides. Specifically binds to the promoter region of its target genes, recognizing a short DNA motif called the MalT box. The polypeptide is HTH-type transcriptional regulator MalT (Escherichia coli (strain ATCC 8739 / DSM 1576 / NBRC 3972 / NCIMB 8545 / WDCM 00012 / Crooks)).